The primary structure comprises 661 residues: B3 domain-containing protein Os12g0591400 (661 aa).

DNA-binding regions (TF-B3) lie at residues 2 to 95, 197 to 290, 437 to 535, and 562 to 658; these read GDQK…FNPS, KTRC…FNPS, LYIT…FKES, and TNLT…IRKG.

It is found in the nucleus. The protein is B3 domain-containing protein Os12g0591400 of Oryza sativa subsp. japonica (Rice).